Here is a 91-residue protein sequence, read N- to C-terminus: Cell division protein ZapA (91 aa).

A coiled-coil region spans residues 58 to 91 (LTAVNIASEYLKLKEEYNRLREQLKKEKDGERDD).

It belongs to the ZapA family. Type 2 subfamily. Homodimer. Interacts with FtsZ.

It localises to the cytoplasm. Its function is as follows. Activator of cell division through the inhibition of FtsZ GTPase activity, therefore promoting FtsZ assembly into bundles of protofilaments necessary for the formation of the division Z ring. It is recruited early at mid-cell but it is not essential for cell division. The polypeptide is Cell division protein ZapA (Geobacillus kaustophilus (strain HTA426)).